Consider the following 895-residue polypeptide: Zyg eleven-related protein 1 (895 aa).

Disordered stretches follow at residues 58–78 (HGPA…PDQG) and 195–221 (RGQM…SDHQ). The segment covering 205 to 220 (SPLSPSSQPSSIQSDH) has biased composition (low complexity).

As to quaternary structure, interacts with elc-1. Part of an E3 ubiquitin ligase complex including zer-11, cul-2 and elc-1.

Its function is as follows. Acts as a target recruitment subunit in the E3 ubiquitin ligase complex zer-1-cul-2-elc-1. This Caenorhabditis elegans protein is Zyg eleven-related protein 1 (zer-1).